The primary structure comprises 144 residues: Large ribosomal subunit protein uL16 (144 aa).

It belongs to the universal ribosomal protein uL16 family. As to quaternary structure, part of the 50S ribosomal subunit.

Its function is as follows. Binds 23S rRNA and is also seen to make contacts with the A and possibly P site tRNAs. This is Large ribosomal subunit protein uL16 from Acidobacterium capsulatum (strain ATCC 51196 / DSM 11244 / BCRC 80197 / JCM 7670 / NBRC 15755 / NCIMB 13165 / 161).